The chain runs to 340 residues: Guanine nucleotide-binding protein subunit beta-1 (340 aa).

7 WD repeats span residues 53–83 (GHLA…IVWD), 95–125 (LRSS…SIYS), 141–170 (GHTG…ALWD), 182–212 (GHTG…KLWD), 224–254 (GHES…RLFD), 268–298 (NIIC…NVWD), and 310–340 (GHDN…KIWN).

Belongs to the WD repeat G protein beta family. In terms of assembly, g proteins are composed of 3 units, alpha, beta and gamma. Interacts with G protein gamma subunits gpc-1 and gpc-2 and with egl-10 and eat-16. Interacts with goa-1 (in GDP-bound form).

In terms of biological role, guanine nucleotide-binding proteins (G proteins) are involved as a modulator or transducer in various transmembrane signaling systems. The beta and gamma chains are required for the GTPase activity, for replacement of GDP by GTP, and for G protein-effector interaction. In the early embryo, controls the magnitude of the forces acting on centrosomes but is not required for generating asymmetric forces. In Caenorhabditis briggsae, this protein is Guanine nucleotide-binding protein subunit beta-1 (gpb-1).